Consider the following 124-residue polypeptide: Holo-[acyl-carrier-protein] synthase (124 aa).

Mg(2+)-binding residues include Asp-7 and Glu-55.

It belongs to the P-Pant transferase superfamily. AcpS family. Requires Mg(2+) as cofactor.

It localises to the cytoplasm. It catalyses the reaction apo-[ACP] + CoA = holo-[ACP] + adenosine 3',5'-bisphosphate + H(+). Transfers the 4'-phosphopantetheine moiety from coenzyme A to a Ser of acyl-carrier-protein. This is Holo-[acyl-carrier-protein] synthase from Borreliella afzelii (strain PKo) (Borrelia afzelii).